The sequence spans 535 residues: INSYN2B protein (535 aa).

Disordered stretches follow at residues 23–85 (LVKQ…SFPR), 215–346 (EARE…RSSS), and 360–387 (KLPSQSDTPELQTGVGSEQLPASIPRQE). Polar residues predominate over residues 46–59 (KNPTGVTEVNTQTP). The span at 219 to 232 (SALSPESSAEESNS) shows a compositional bias: low complexity. Polar residues-rich tracts occupy residues 258 to 269 (CSNTNSSASNMP), 307 to 319 (RTHSSPEPGSRSQ), and 361 to 375 (LPSQSDTPELQTGVG). The stretch at 411-448 (DLQGRLQSVEESLHSNQEKIKVLLNVIQDLEKAHALTE) forms a coiled coil. The tract at residues 493–528 (LEEAEPTEEAPSPPKSPAEAPVPEKQDLRRKSKKVK) is disordered.

Belongs to the INSYN2 family.

The polypeptide is INSYN2B protein (Insyn2b) (Mus musculus (Mouse)).